Here is a 192-residue protein sequence, read N- to C-terminus: HTH-type transcriptional repressor SCO4008 (192 aa).

An HTH tetR-type domain is found at 7 to 67 (EATKARIFEA…SVLEKKMLDL (61 aa)). The H-T-H motif DNA-binding region spans 30–49 (RIDRIAAEARANKQLIYAYY).

In terms of assembly, homodimer. Four dimers bind to the two operator sites.

With respect to regulation, binding of a wide range of cationic hydrophobic compounds to SCO4008 causes a decrease in DNA-binding, probably via allosteric conformational change of SCO4008. In terms of biological role, probably regulates the expression of its own gene and the adjacent SCO4007 gene by binding to two operator sites in the SCO4007-SCO4008 intergenic region. The polypeptide is HTH-type transcriptional repressor SCO4008 (Streptomyces coelicolor (strain ATCC BAA-471 / A3(2) / M145)).